A 553-amino-acid polypeptide reads, in one-letter code: Cytokine-like nuclear factor N-PAC (553 aa).

One can recognise a PWWP domain in the interval 8 to 66 (LGDLVWGKLGRYPPWPGKIVNPPKDLKKPRGKKCFFVKFFGTEDHAWIKVEQLKPYHAH). Composition is skewed to basic and acidic residues over residues 92-145 (RAKG…EGKK) and 162-182 (RAQE…KDLT). The segment at 92 to 188 (RAKGKDQTSS…KDLTIPESST (97 aa)) is disordered. Position 130 is a phosphoserine (S130). K135 participates in a covalent cross-link: Glycyl lysine isopeptide (Lys-Gly) (interchain with G-Cter in SUMO2). The residue at position 167 (S167) is a Phosphoserine. Positions 168-180 (PRKRGRPPKDEKD) form a DNA-binding region, a.T hook. Residues K176, K179, K201, and K211 each participate in a glycyl lysine isopeptide (Lys-Gly) (interchain with G-Cter in SUMO2) cross-link. The interval 214-217 (DPHF) is interaction with histone H3. An interaction with KDM1B region spans residues 216–225 (HFHHFLLSQT). Glycyl lysine isopeptide (Lys-Gly) (interchain with G-Cter in SUMO2) cross-links involve residues K227, K237, K240, and K269. Residues 261 to 553 (GSITPTDKKI…MSAVYRAYIH (293 aa)) are dehydrogenase domain. Residue 271–285 (GFLGLGLMGSGIVSN) participates in NAD(+) binding. K302 is covalently cross-linked (Glycyl lysine isopeptide (Lys-Gly) (interchain with G-Cter in SUMO2)). NAD(+) contacts are provided by T362 and K505. At S540 the chain carries Phosphoserine.

It belongs to the HIBADH-related family. NP60 subfamily. Homotetramere. Interacts with MAPK14. Interacts with KDM1B at nucleosomes; this interaction stimulates H3K4me1 and H3K4me2 demethylation. Binds to mononucleosomes. Interacts with GATA4; the interaction is required for a synergistic activation of GATA4 target genes transcription.

Its subcellular location is the nucleus. It is found in the chromosome. Its function is as follows. Cytokine-like nuclear factor with chromatin gene reader activity involved in chromatin modification and regulation of gene expression. Acts as a nucleosome-destabilizing factor that is recruited to genes during transcriptional activation. Recognizes and binds histone H3 without a preference for specific epigenetic markers and also binds DNA. Interacts with KDM1B and promotes its histone demethylase activity by facilitating the capture of H3 tails, they form a multifunctional enzyme complex that modifies transcribed chromatin and facilitates Pol II transcription through nucleosomes. Stimulates the acetylation of 'Lys-56' of nucleosomal histone H3 (H3K56ac) by EP300. With GATA4, co-binds a defined set of heart development genes and coregulates their expression during cardiomyocyte differentiation. Regulates p38 MAP kinase activity by mediating stress activation of MAPK14/p38alpha and specifically regulating MAPK14 signaling. Indirectly promotes phosphorylation of MAPK14 and activation of ATF2. The phosphorylation of MAPK14 requires upstream activity of MAP2K4 and MAP2K6. The sequence is that of Cytokine-like nuclear factor N-PAC (GLYR1) from Pongo abelii (Sumatran orangutan).